A 545-amino-acid chain; its full sequence is Glucose-6-phosphate isomerase 1 (545 aa).

Glu356 (proton donor) is an active-site residue. Residues His387 and Lys508 contribute to the active site.

It belongs to the GPI family.

The protein resides in the cytoplasm. It carries out the reaction alpha-D-glucose 6-phosphate = beta-D-fructose 6-phosphate. The protein operates within carbohydrate biosynthesis; gluconeogenesis. It participates in carbohydrate degradation; glycolysis; D-glyceraldehyde 3-phosphate and glycerone phosphate from D-glucose: step 2/4. Catalyzes the reversible isomerization of glucose-6-phosphate to fructose-6-phosphate. The protein is Glucose-6-phosphate isomerase 1 of Cupriavidus pinatubonensis (strain JMP 134 / LMG 1197) (Cupriavidus necator (strain JMP 134)).